The primary structure comprises 862 residues: DNA mismatch repair protein MutS (862 aa).

608 to 615 (GPNMAGKS) contributes to the ATP binding site.

This sequence belongs to the DNA mismatch repair MutS family.

This protein is involved in the repair of mismatches in DNA. It is possible that it carries out the mismatch recognition step. This protein has a weak ATPase activity. This chain is DNA mismatch repair protein MutS, found in Bacteroides fragilis (strain YCH46).